Here is a 198-residue protein sequence, read N- to C-terminus: Holliday junction branch migration complex subunit RuvA (198 aa).

The tract at residues 1–63 (MIAYLSGAVR…EDAQLLFGFL (63 aa)) is domain I. A domain II region spans residues 64–142 (DTDSLRLFDL…EHLAAGAPVS (79 aa)). The segment at 143–150 (AGKAALTS) is flexible linker. The tract at residues 150–198 (STAGRDAIEALLALGFREPQVRSVVAELLAADPEQSADALIRKGLGKLR) is domain III.

This sequence belongs to the RuvA family. Homotetramer. Forms an RuvA(8)-RuvB(12)-Holliday junction (HJ) complex. HJ DNA is sandwiched between 2 RuvA tetramers; dsDNA enters through RuvA and exits via RuvB. An RuvB hexamer assembles on each DNA strand where it exits the tetramer. Each RuvB hexamer is contacted by two RuvA subunits (via domain III) on 2 adjacent RuvB subunits; this complex drives branch migration. In the full resolvosome a probable DNA-RuvA(4)-RuvB(12)-RuvC(2) complex forms which resolves the HJ.

It localises to the cytoplasm. Functionally, the RuvA-RuvB-RuvC complex processes Holliday junction (HJ) DNA during genetic recombination and DNA repair, while the RuvA-RuvB complex plays an important role in the rescue of blocked DNA replication forks via replication fork reversal (RFR). RuvA specifically binds to HJ cruciform DNA, conferring on it an open structure. The RuvB hexamer acts as an ATP-dependent pump, pulling dsDNA into and through the RuvAB complex. HJ branch migration allows RuvC to scan DNA until it finds its consensus sequence, where it cleaves and resolves the cruciform DNA. This Deinococcus geothermalis (strain DSM 11300 / CIP 105573 / AG-3a) protein is Holliday junction branch migration complex subunit RuvA.